The primary structure comprises 102 residues: uncharacterized protein (102 aa).

Positions 1 to 41 (MLFLDSYSLLIQFQRFKNWESPRRFSSSFPLLLFVFKPIFA) are cleaved as a signal peptide.

This is an uncharacterized protein from Saccharomyces cerevisiae (strain ATCC 204508 / S288c) (Baker's yeast).